We begin with the raw amino-acid sequence, 211 residues long: Protein-L-isoaspartate O-methyltransferase (211 aa).

S62 is a catalytic residue.

This sequence belongs to the methyltransferase superfamily. L-isoaspartyl/D-aspartyl protein methyltransferase family.

The protein localises to the cytoplasm. It catalyses the reaction [protein]-L-isoaspartate + S-adenosyl-L-methionine = [protein]-L-isoaspartate alpha-methyl ester + S-adenosyl-L-homocysteine. Functionally, catalyzes the methyl esterification of L-isoaspartyl residues in peptides and proteins that result from spontaneous decomposition of normal L-aspartyl and L-asparaginyl residues. It plays a role in the repair and/or degradation of damaged proteins. This is Protein-L-isoaspartate O-methyltransferase from Shewanella pealeana (strain ATCC 700345 / ANG-SQ1).